The sequence spans 503 residues: Dentin matrix acidic phosphoprotein 1 (503 aa).

The first 16 residues, 1–16, serve as a signal peptide directing secretion; it reads MKTVILLVFLWGLSCA. A compositionally biased stretch (basic and acidic residues) spans 23 to 35; sequence HNTESESSEERTG. The tract at residues 23-503 is disordered; sequence HNTESESSEE…QDDNDCQDGY (481 aa). Positions 54-63 are enriched in polar residues; that stretch reads QASPEGQANS. Positions 98–119 are enriched in acidic residues; it reads KEDDEDDSGDDTFGDEDNDLGP. Positions 138-150 are enriched in low complexity; it reads DTTQSSEDSTSQE. Over residues 158–175 the composition is skewed to basic and acidic residues; it reads SDSKDHDSEDEADSRPEA. The segment covering 203–215 has biased composition (acidic residues); it reads SEFDDEGMQSDDP. Composition is skewed to basic and acidic residues over residues 233–243, 267–286, and 293–303; these read RSEESKGDHEP, HVSEEDYRGELTDSNSRETQ, and TASKEESRSES. Over residues 332–348 the composition is skewed to low complexity; the sequence is EPSQESSSESQEGVTSE. Positions 350-352 match the Cell attachment site motif; it reads RGD. The N-linked (GlcNAc...) asparagine glycan is linked to asparagine 356. Residues 362-373 are compositionally biased toward acidic residues; it reads DQEDSESSEEDS. A glycan (N-linked (GlcNAc...) asparagine) is linked at asparagine 394. The segment covering 407–418 has biased composition (polar residues); that stretch reads AQDGDSSSQEGL. Positions 419 to 435 are enriched in low complexity; sequence QSQSASTESRSQESQSE. N-linked (GlcNAc...) asparagine glycosylation is present at asparagine 457. The span at 467–492 shows a compositional bias: basic and acidic residues; sequence EDIRPKNMEADSRKLIVDAYHNKPIG. Residues 493-503 are compositionally biased toward acidic residues; it reads DQDDNDCQDGY.

Interacts with importin alpha. Phosphorylated in the cytosol and extracellular matrix and unphosphorylated in the nucleus. Phosphorylation is necessary for nucleocytoplasmic transport and may be catalyzed by a nuclear isoform of CK2 and can be augmented by calcium. Phosphorylated (in vitro) by FAM20C in the extracellular medium at sites within the S-x-E/pS motif. As to expression, expressed in tooth particularly in odontoblast, ameloblast and cementoblast. Also expressed in bone particularly in osteoblast.

The protein localises to the nucleus. Its subcellular location is the cytoplasm. It is found in the secreted. The protein resides in the extracellular space. It localises to the extracellular matrix. Its function is as follows. May have a dual function during osteoblast differentiation. In the nucleus of undifferentiated osteoblasts, unphosphorylated form acts as a transcriptional component for activation of osteoblast-specific genes like osteocalcin. During the osteoblast to osteocyte transition phase it is phosphorylated and exported into the extracellular matrix, where it regulates nucleation of hydroxyapatite. The sequence is that of Dentin matrix acidic phosphoprotein 1 from Mus musculus (Mouse).